The primary structure comprises 356 residues: Holliday junction branch migration complex subunit RuvB (356 aa).

Residues T4–Y191 form a large ATPase domain (RuvB-L) region. Residues L30, R31, G72, K75, T76, T77, E138 to Y140, R181, Y191, and R228 contribute to the ATP site. A Mg(2+)-binding site is contributed by T76. Residues D192 to D262 are small ATPAse domain (RuvB-S). The segment at P265–K356 is head domain (RuvB-H). 3 residues coordinate DNA: R301, R320, and R325.

The protein belongs to the RuvB family. Homohexamer. Forms an RuvA(8)-RuvB(12)-Holliday junction (HJ) complex. HJ DNA is sandwiched between 2 RuvA tetramers; dsDNA enters through RuvA and exits via RuvB. An RuvB hexamer assembles on each DNA strand where it exits the tetramer. Each RuvB hexamer is contacted by two RuvA subunits (via domain III) on 2 adjacent RuvB subunits; this complex drives branch migration. In the full resolvosome a probable DNA-RuvA(4)-RuvB(12)-RuvC(2) complex forms which resolves the HJ.

The protein localises to the cytoplasm. It carries out the reaction ATP + H2O = ADP + phosphate + H(+). Its function is as follows. The RuvA-RuvB-RuvC complex processes Holliday junction (HJ) DNA during genetic recombination and DNA repair, while the RuvA-RuvB complex plays an important role in the rescue of blocked DNA replication forks via replication fork reversal (RFR). RuvA specifically binds to HJ cruciform DNA, conferring on it an open structure. The RuvB hexamer acts as an ATP-dependent pump, pulling dsDNA into and through the RuvAB complex. RuvB forms 2 homohexamers on either side of HJ DNA bound by 1 or 2 RuvA tetramers; 4 subunits per hexamer contact DNA at a time. Coordinated motions by a converter formed by DNA-disengaged RuvB subunits stimulates ATP hydrolysis and nucleotide exchange. Immobilization of the converter enables RuvB to convert the ATP-contained energy into a lever motion, pulling 2 nucleotides of DNA out of the RuvA tetramer per ATP hydrolyzed, thus driving DNA branch migration. The RuvB motors rotate together with the DNA substrate, which together with the progressing nucleotide cycle form the mechanistic basis for DNA recombination by continuous HJ branch migration. Branch migration allows RuvC to scan DNA until it finds its consensus sequence, where it cleaves and resolves cruciform DNA. The sequence is that of Holliday junction branch migration complex subunit RuvB from Burkholderia cenocepacia (strain HI2424).